The sequence spans 399 residues: Tryptophan synthase beta chain (399 aa).

N6-(pyridoxal phosphate)lysine is present on Lys90.

The protein belongs to the TrpB family. As to quaternary structure, tetramer of two alpha and two beta chains. Pyridoxal 5'-phosphate serves as cofactor.

It carries out the reaction (1S,2R)-1-C-(indol-3-yl)glycerol 3-phosphate + L-serine = D-glyceraldehyde 3-phosphate + L-tryptophan + H2O. It participates in amino-acid biosynthesis; L-tryptophan biosynthesis; L-tryptophan from chorismate: step 5/5. Functionally, the beta subunit is responsible for the synthesis of L-tryptophan from indole and L-serine. This chain is Tryptophan synthase beta chain, found in Phocaeicola vulgatus (strain ATCC 8482 / DSM 1447 / JCM 5826 / CCUG 4940 / NBRC 14291 / NCTC 11154) (Bacteroides vulgatus).